The chain runs to 527 residues: MTQQAAEVAKRRTFAIISHPDAGKTTITEKLLLMGKAISVAGTVKSRKSDRHATSDWMEMEKQRGISITTSVMQFPYRDHMINLLDTPGHEDFSEDTYRTLTAVDSALMVLDGGKGVEPRTIALMDVCRLRDTPIVSFINKLDRDIRDPIELLDEIEAVLKIKAAPITWPIGCYRDFKGVYHLADDYIIVYTAGHGHERTDTKIIQNLDSDEARAHLGDEYDRFVEQLELVQGACHEFNQQEFIDGQLTPVFFGTALGNFGVDHVLDAVVNWAPMPLARVANERTVEPEEEKFAGFVFKIQANMDPKHRDRIAFMRICSGRYEKGMKMRHVRLGKDVRIGDALTFFSSEREQLEEAYAGDIIGLHNHGTIQIGDTFTEGEALGFTGIPHFAPELFRRVRLKDPLKSKQLRQGLQQLAEEGATQVFFPQRSNDIILGAVGVLQFDVVASRLKEEYKVECAYEPITVWSARWIDCADKKKLEEFENKAVENLAVDGGGHLTYLAPTRVNLALMEERWPDVKFSATREHH.

Residues 9 to 277 enclose the tr-type G domain; that stretch reads AKRRTFAIIS…AVVNWAPMPL (269 aa). GTP contacts are provided by residues 18-25, 86-90, and 140-143; these read SHPDAGKT, DTPGH, and NKLD.

Belongs to the TRAFAC class translation factor GTPase superfamily. Classic translation factor GTPase family. PrfC subfamily.

It localises to the cytoplasm. In terms of biological role, increases the formation of ribosomal termination complexes and stimulates activities of RF-1 and RF-2. It binds guanine nucleotides and has strong preference for UGA stop codons. It may interact directly with the ribosome. The stimulation of RF-1 and RF-2 is significantly reduced by GTP and GDP, but not by GMP. This Pseudomonas syringae pv. tomato (strain ATCC BAA-871 / DC3000) protein is Peptide chain release factor 3.